Reading from the N-terminus, the 234-residue chain is MTQQLNVDPAEIKKFEDMASRWWDLEGEFKPLHQINPLRLNYVLENANGLFGKKVLDVGCGGGILAESMAKQGADVIGLDMGKEPLTVARLHALETGTKLEYVQSTAEQHAEENPETYDVVTCMEMLEHVPDPLSVIRSCAKMVKPGGHVFFSTLNRNIKSYLFAIVGAEQLLKLVPKGTHDHNKFIRPSELLKMLDQTALQERGITGLHYNPLTDTYSLGKNVDVNYIVHTTL.

4 residues coordinate S-adenosyl-L-methionine: arginine 39, glycine 59, aspartate 80, and methionine 124.

It belongs to the methyltransferase superfamily. UbiG/COQ3 family.

It catalyses the reaction a 3-demethylubiquinol + S-adenosyl-L-methionine = a ubiquinol + S-adenosyl-L-homocysteine + H(+). The enzyme catalyses a 3-(all-trans-polyprenyl)benzene-1,2-diol + S-adenosyl-L-methionine = a 2-methoxy-6-(all-trans-polyprenyl)phenol + S-adenosyl-L-homocysteine + H(+). It participates in cofactor biosynthesis; ubiquinone biosynthesis. Functionally, O-methyltransferase that catalyzes the 2 O-methylation steps in the ubiquinone biosynthetic pathway. This is Ubiquinone biosynthesis O-methyltransferase from Aliivibrio fischeri (strain ATCC 700601 / ES114) (Vibrio fischeri).